A 556-amino-acid polypeptide reads, in one-letter code: Capsid vertex component 2 (556 aa).

The segment at 1–54 (MWPVGSSYTRACSVQRWPKRCVYWAPSPQNVLEINPHRFQESRRSAALYRKHVV) is interaction with major capsid protein/MCP. Residues 104 to 136 (QPASSNQGGARPQTDPHVPQPAPAIPSAPPKEN) form a disordered region. Residues 121–132 (VPQPAPAIPSAP) are compositionally biased toward pro residues.

The protein belongs to the herpesviridae CVC2 protein family. As to quaternary structure, heterodimerizes with CVC1. Interacts with major capsid protein/MCP and triplex capsid protein 1/TRX1 at the pentamer vertices. Interacts with the large tegument protein/LTP.

The protein resides in the virion. It is found in the host nucleus. Its function is as follows. Capsid vertex-specific component that plays a role during viral DNA encapsidation, assuring correct genome cleavage and presumably stabilizing capsids that contain full-length viral genomes. Participates in the interaction between the capsid and the tegument through interaction with the large tegument protein/LTP. This chain is Capsid vertex component 2, found in Connochaetes taurinus (Blue wildebeest).